The sequence spans 160 residues: SsrA-binding protein (160 aa).

The interval 131–160 is disordered; the sequence is KKEYDKRDTEKARDSDREIQRAIRSKGKED.

This sequence belongs to the SmpB family.

The protein localises to the cytoplasm. In terms of biological role, required for rescue of stalled ribosomes mediated by trans-translation. Binds to transfer-messenger RNA (tmRNA), required for stable association of tmRNA with ribosomes. tmRNA and SmpB together mimic tRNA shape, replacing the anticodon stem-loop with SmpB. tmRNA is encoded by the ssrA gene; the 2 termini fold to resemble tRNA(Ala) and it encodes a 'tag peptide', a short internal open reading frame. During trans-translation Ala-aminoacylated tmRNA acts like a tRNA, entering the A-site of stalled ribosomes, displacing the stalled mRNA. The ribosome then switches to translate the ORF on the tmRNA; the nascent peptide is terminated with the 'tag peptide' encoded by the tmRNA and targeted for degradation. The ribosome is freed to recommence translation, which seems to be the essential function of trans-translation. The sequence is that of SsrA-binding protein from Azotobacter vinelandii (strain DJ / ATCC BAA-1303).